A 416-amino-acid polypeptide reads, in one-letter code: D-amino acid dehydrogenase (416 aa).

3-17 provides a ligand contact to FAD; it reads ITILGSGVIGVTTAY.

The protein belongs to the DadA oxidoreductase family. FAD serves as cofactor.

It catalyses the reaction a D-alpha-amino acid + A + H2O = a 2-oxocarboxylate + AH2 + NH4(+). The protein operates within amino-acid degradation; D-alanine degradation; NH(3) and pyruvate from D-alanine: step 1/1. Functionally, oxidative deamination of D-amino acids. The protein is D-amino acid dehydrogenase of Brucella abortus (strain S19).